A 361-amino-acid chain; its full sequence is Phosphoserine aminotransferase (361 aa).

R42 serves as a coordination point for L-glutamate. Residues 76–77, W102, T153, D173, and Q196 contribute to the pyridoxal 5'-phosphate site; that span reads AR. K197 carries the post-translational modification N6-(pyridoxal phosphate)lysine. Position 238-239 (238-239) interacts with pyridoxal 5'-phosphate; that stretch reads NT.

It belongs to the class-V pyridoxal-phosphate-dependent aminotransferase family. SerC subfamily. As to quaternary structure, homodimer. The cofactor is pyridoxal 5'-phosphate.

The protein localises to the cytoplasm. The enzyme catalyses O-phospho-L-serine + 2-oxoglutarate = 3-phosphooxypyruvate + L-glutamate. The catalysed reaction is 4-(phosphooxy)-L-threonine + 2-oxoglutarate = (R)-3-hydroxy-2-oxo-4-phosphooxybutanoate + L-glutamate. The protein operates within amino-acid biosynthesis; L-serine biosynthesis; L-serine from 3-phospho-D-glycerate: step 2/3. It functions in the pathway cofactor biosynthesis; pyridoxine 5'-phosphate biosynthesis; pyridoxine 5'-phosphate from D-erythrose 4-phosphate: step 3/5. Functionally, catalyzes the reversible conversion of 3-phosphohydroxypyruvate to phosphoserine and of 3-hydroxy-2-oxo-4-phosphonooxybutanoate to phosphohydroxythreonine. This Yersinia enterocolitica serotype O:8 / biotype 1B (strain NCTC 13174 / 8081) protein is Phosphoserine aminotransferase.